A 205-amino-acid chain; its full sequence is Holliday junction branch migration complex subunit RuvA (205 aa).

The segment at 1 to 64 (MIGKLKGVID…EDMIRLYGFA (64 aa)) is domain I. A domain II region spans residues 65-143 (NQLEREWFRL…AFAGDASGTI (79 aa)). The interval 144 to 152 (GLKQELGAG) is flexible linker. The tract at residues 153–205 (AAPAPVADAVSALSNLGYSRDQAANAVAAALKEAGENADSAKLIRLGLKELSR) is domain III.

The protein belongs to the RuvA family. In terms of assembly, homotetramer. Forms an RuvA(8)-RuvB(12)-Holliday junction (HJ) complex. HJ DNA is sandwiched between 2 RuvA tetramers; dsDNA enters through RuvA and exits via RuvB. An RuvB hexamer assembles on each DNA strand where it exits the tetramer. Each RuvB hexamer is contacted by two RuvA subunits (via domain III) on 2 adjacent RuvB subunits; this complex drives branch migration. In the full resolvosome a probable DNA-RuvA(4)-RuvB(12)-RuvC(2) complex forms which resolves the HJ.

Its subcellular location is the cytoplasm. Its function is as follows. The RuvA-RuvB-RuvC complex processes Holliday junction (HJ) DNA during genetic recombination and DNA repair, while the RuvA-RuvB complex plays an important role in the rescue of blocked DNA replication forks via replication fork reversal (RFR). RuvA specifically binds to HJ cruciform DNA, conferring on it an open structure. The RuvB hexamer acts as an ATP-dependent pump, pulling dsDNA into and through the RuvAB complex. HJ branch migration allows RuvC to scan DNA until it finds its consensus sequence, where it cleaves and resolves the cruciform DNA. The polypeptide is Holliday junction branch migration complex subunit RuvA (Brucella anthropi (strain ATCC 49188 / DSM 6882 / CCUG 24695 / JCM 21032 / LMG 3331 / NBRC 15819 / NCTC 12168 / Alc 37) (Ochrobactrum anthropi)).